The following is a 491-amino-acid chain: Serine hydroxymethyltransferase (491 aa).

Residues Leu173 and Gly177 to Leu179 each bind (6S)-5,6,7,8-tetrahydrofolate. Lys285 carries the N6-(pyridoxal phosphate)lysine modification.

The protein belongs to the SHMT family. In terms of assembly, homodimer. Requires pyridoxal 5'-phosphate as cofactor.

The protein resides in the cytoplasm. The enzyme catalyses (6R)-5,10-methylene-5,6,7,8-tetrahydrofolate + glycine + H2O = (6S)-5,6,7,8-tetrahydrofolate + L-serine. Its pathway is one-carbon metabolism; tetrahydrofolate interconversion. The protein operates within amino-acid biosynthesis; glycine biosynthesis; glycine from L-serine: step 1/1. In terms of biological role, catalyzes the reversible interconversion of serine and glycine with tetrahydrofolate (THF) serving as the one-carbon carrier. This reaction serves as the major source of one-carbon groups required for the biosynthesis of purines, thymidylate, methionine, and other important biomolecules. Also exhibits THF-independent aldolase activity toward beta-hydroxyamino acids, producing glycine and aldehydes, via a retro-aldol mechanism. This Cutibacterium acnes (strain DSM 16379 / KPA171202) (Propionibacterium acnes) protein is Serine hydroxymethyltransferase.